Reading from the N-terminus, the 1024-residue chain is Beta-galactosidase (1024 aa).

Substrate contacts are provided by Asn103 and Asp202. Asp202 serves as a coordination point for Na(+). 3 residues coordinate Mg(2+): Glu417, His419, and Glu462. Residues Glu462 and 538-541 (EYAH) each bind substrate. The active-site Proton donor is Glu462. The active-site Nucleophile is Glu538. Asn598 contributes to the Mg(2+) binding site. Na(+)-binding residues include Phe602 and Asn605. Substrate is bound by residues Asn605 and Trp1000.

The protein belongs to the glycosyl hydrolase 2 family. Homotetramer. Requires Mg(2+) as cofactor. Na(+) serves as cofactor.

It catalyses the reaction Hydrolysis of terminal non-reducing beta-D-galactose residues in beta-D-galactosides.. In Escherichia coli O139:H28 (strain E24377A / ETEC), this protein is Beta-galactosidase.